The primary structure comprises 73 residues: V-type proton ATPase subunit e (73 aa).

Topologically, residues 1 to 3 (MSS) are lumenal. Residues 4 to 24 (FYTVVGVFIVVSAMSVLFWIM) traverse the membrane as a helical segment. At 25-35 (APKNNQAVWRS) the chain is on the cytoplasmic side. The chain crosses the membrane as a helical span at residues 36 to 56 (TVILTLAMMFLMWAITFLCQL). Over 57–73 (HPLVAPRRSDLRPEFAE) the chain is Lumenal.

It belongs to the V-ATPase e1/e2 subunit family. As to quaternary structure, V-ATPase is a heteromultimeric enzyme composed of a peripheral catalytic V1 complex (components A to H) attached to an integral membrane V0 proton pore complex (components: a, c, c', c'', d, e, f and VOA1).

It localises to the vacuole membrane. Subunit of the V0 complex of vacuolar(H+)-ATPase (V-ATPase), a multisubunit enzyme composed of a peripheral complex (V1) that hydrolyzes ATP and a membrane integral complex (V0) that translocates protons. V-ATPase is responsible for acidifying and maintaining the pH of intracellular compartments. The sequence is that of V-type proton ATPase subunit e (VMA9) from Saccharomyces cerevisiae (strain ATCC 204508 / S288c) (Baker's yeast).